The sequence spans 374 residues: Tomoregulin-2 (374 aa).

The signal sequence occupies residues 1-40 (MVLWESPRQCSSWTLCEGFCWLLLLPVTLLIIARPVKLAA). Residues 41-320 (FPTSLSDCQT…VPGPVRFQYV (280 aa)) are Extracellular-facing. Asn-55 carries an N-linked (GlcNAc...) asparagine glycan. Kazal-like domains are found at residues 90–137 (VCQF…SCAT) and 181–229 (VCNI…RCQD). 6 cysteine pairs are disulfide-bonded: Cys-91–Cys-121, Cys-95–Cys-114, Cys-103–Cys-135, Cys-182–Cys-213, Cys-186–Cys-206, and Cys-195–Cys-227. N-linked (GlcNAc...) asparagine glycosylation occurs at Asn-230. In terms of domain architecture, EGF-like spans 261–301 (HHIPCPEHYNGFCMHGKCEHSINMQEPSCRCDAGYTGQHCE). Intrachain disulfides connect Cys-265-Cys-278, Cys-273-Cys-289, and Cys-291-Cys-300. Positions 303 to 320 (KDYSVLYVVPGPVRFQYV) are required for shedding. Residues 321–341 (LIAAVIGTIQIAVICVVVLCI) form a helical membrane-spanning segment. The Cytoplasmic segment spans residues 342–374 (TRKCPRSNRIHRQKQNTGHYSSDNTTRASTRLI). The segment at 353–374 (RQKQNTGHYSSDNTTRASTRLI) is disordered. A compositionally biased stretch (polar residues) spans 356–374 (QNTGHYSSDNTTRASTRLI).

It belongs to the tomoregulin family. Post-translationally, O-glycosylated; contains chondroitin sulfate glycosaminoglycans. A soluble form (TMEFF2-ECD) is produced by proteolytic shedding. This shedding can be induced by phorbol ester or pro-inflammatory cytokines such as TNFalpha, and is mediated by a metalloproteinase ADAM. In terms of tissue distribution, widely expressed in the brain. In the olfactory bulb expressed in mitral cell, granule, and glomerular layers. In the hippocampus expressed in hippocampal cornu ammonis, pyramidal layer, dentate gyrus, and substantia nigra pars compacta.

Its subcellular location is the membrane. May be a survival factor for hippocampal and mesencephalic neurons. The shedded form may up-regulate cell proliferation. This Mus musculus (Mouse) protein is Tomoregulin-2 (Tmeff2).